The primary structure comprises 202 residues: Ribonuclease HII (202 aa).

Residues 12 to 201 enclose the RNase H type-2 domain; sequence LLIAGVDEAG…VRQLKLFIPE (190 aa). A divalent metal cation contacts are provided by aspartate 18, glutamate 19, and aspartate 110.

The protein belongs to the RNase HII family. Mn(2+) serves as cofactor. The cofactor is Mg(2+).

The protein resides in the cytoplasm. The enzyme catalyses Endonucleolytic cleavage to 5'-phosphomonoester.. Its function is as follows. Endonuclease that specifically degrades the RNA of RNA-DNA hybrids. In Coxiella burnetii (strain CbuG_Q212) (Coxiella burnetii (strain Q212)), this protein is Ribonuclease HII.